The primary structure comprises 573 residues: NADH-ubiquinone oxidoreductase chain 5 (573 aa).

A run of 16 helical transmembrane segments spans residues 4-24 (ISFI…LYYL), 44-64 (IVMT…VLMI), 85-105 (FIML…SPNL), 106-126 (VSIL…VIYF), 147-167 (VALL…YIFY), 170-190 (VMQN…AAMT), 212-234 (SALV…FNIV), 239-259 (WLGQ…GLGA), 268-288 (IIAL…SMGF), 294-314 (FHLL…GAII), 337-357 (SACF…AGFY), 377-396 (FLYF…LVYY), 422-442 (LGLL…IFPF), 452-472 (LKML…LISI), 487-507 (LTLF…GMIF), and 552-572 (LKIY…FLLF).

The protein belongs to the complex I subunit 5 family.

Its subcellular location is the mitochondrion inner membrane. It carries out the reaction a ubiquinone + NADH + 5 H(+)(in) = a ubiquinol + NAD(+) + 4 H(+)(out). In terms of biological role, core subunit of the mitochondrial membrane respiratory chain NADH dehydrogenase (Complex I) that is believed to belong to the minimal assembly required for catalysis. Complex I functions in the transfer of electrons from NADH to the respiratory chain. The immediate electron acceptor for the enzyme is believed to be ubiquinone. This Drosophila yakuba (Fruit fly) protein is NADH-ubiquinone oxidoreductase chain 5 (mt:ND5).